The sequence spans 1912 residues: MGNGYFRTSQTSSSSRQREKRGKDSYSYQHNYVDRVRLEDTTGGHYHNNQHQQTTHDPRCPQLRAAGWRHTHKSVSHLDLATSCHDAAGTGLGRHSQQLHHHHSNQVNQHHHQQQQSHHHLQHANLHSHHPHAQPHWTQCRVGGAGSGNGQLRNARSLDYTQLEREENALDIAEFYWRFDAEAPLDQVDSYAVLPINDNFEPSAATSTAVGSKETTTTVANKANGSATTNATTAAANALLDILGSESCSLRRSRSLAVIREETFSDLQIGSANSSRRRSQLIPRARLVNRGFFRESPRSRHKFQFKQFKKKPPAKLLRLNGKPNQATLVGEQPADQPTADDTQSQRSNSATCDSHQQQQQQQHQPQQQHQQQQHRLSGESRDFDVYYDNLKRLDALALNLSEQLHPWHNDKSDLESLNSDYFKNSLHQNHLDQQQPSSLEFEALEQVAASLLKERPRIYQSRRQQQKRNNHHSNCLQRHLDTGGESCPEHSQSSVFPETTTSNSDDQTDSPSLSEQEYDLTHIEEIYQQGNNGEESYEIISLTTTTRTRFESSEEGEEEQTGEEVVDSLTTPTEPQTSDSESTLRQNHNEQLDKLIAYDSVYLSSEDSSDCTLVGESCESFEQRTFTSCGESGELETRSLLHISIEDTVYEPQAKQHKKATNQEDQPAPLLTTTAKVEAQIFTQVLKVEHTPKPNILAVVEKRKLKQEEVKHQPPELKRQATDSFVVTANKSNLAENQYHSLPDVNIGVSLKVCESIDKELRSSYNQQRQQQRKEAKKEQQVTRAETYDSIRRFGRAHQKARQREYQEREREREKEASAALQEKDKEREREKPKINKEFSAQERQIEVKETTKSQDIIKEKEQVSRKEEAEDDEEEEPLPPPPPPLTEESQQEDTVADVEEEDNLSVSISQPEQPKEAPVIEVANFSKLIERRAQEIRERQEQIKPSFQIIVTDAQNNIIQKEAIQENKETSQRIEPKPSPKTNSNSSSTCNLVQRPLRRSVSSSSGKPLEHRILSTGAPIYKARPVRVLPSSSSDSSFSRGKMSRPQILHVVDGRGGVAGGGAGGTLRRRSSARSIASTISSPGGEVANEYLQKVDAVRCYWNKLAGNEPETLKTEQPAKETQPGIHFQLGGETTTQGTDKSAVGNDFCSMMPHPSIEIVELGEGAQKATIVKAAPEREEDPDEDQDQFDHIRYKVLKSQQLIRNNFLSTRNKKEAQFDGLIQYLQEYSFQELLSNNNVVIVEPVRTKIERPLQVGINSGSTTTPTTVPPPKPPRVVNASASQPRKTRQKQTGGAAAKRHFFYQPVRVNRELYEDELPDPDTVRNVRRFFEQNVLPTPGQGLLVQSQQKFGGSACQLSPKSRRARGYRYLTIDTSYGGAEEQPKGMEMLEEHKAKHWDNASLSSGISSGVLSSPCGEYHHQESPVMACKDVHVQDVVRRHNSNAANAKARAKFASRRTWCMGAGGPGANESLYRQIYENNLGNSEQQENGEHLEEEDDEQDDQYEDDVEQDMCENYYVSNDVLAKIRECGSTVTYYGGRVLDKTATSTAAPSTKTTQPMTGSATRSRIRQIEACNVCLPSERCEHRLQTKQAAAKQQQDSYQGIKFKLVKSNSCSSRLELAGTGEDEVTADSEVVRKMVHHFEANQTTASNDVQVTINSQSQITSTKKEPEEDVPRRQVTVNNHINVLGDTMPQASQEKAENFNGRPEENGYGAVETVPTYESQAMNIRLDATENKNILQTAAATAAANKVCRNKNVDLAYTLVKTTTNSPKGKPIEAPRQKIGKQLREVEENVEKAAVTKATIKLTKGAPSQIIVPVDIHSQASIVAHTAPIPERRLSNASSSNSVVDKTVVRHYVANDKSIYERRKYDEIEFEEFEVYDPSKEPPPQVEEGTDKIPTDAELYDSLDDKM.

10 disordered regions span residues 1 to 32, 89 to 145, 298 to 377, 460 to 515, 545 to 586, 764 to 920, 965 to 1010, 1257 to 1297, 1486 to 1507, and 1881 to 1912; these read MGNG…QHNY, GTGL…VGGA, RSRH…HRLS, QSRR…SLSE, TTRT…TLRQ, SYNQ…EAPV, IQEN…GKPL, GINS…GGAA, EQQE…QYED, and YDPS…DDKM. Basic residues-rich tracts occupy residues 97-133 and 299-313; these read QQLH…HPHA and SRHK…KKPP. Over residues 339-354 the composition is skewed to polar residues; that stretch reads ADDTQSQRSNSATCDS. Positions 355–374 are enriched in low complexity; it reads HQQQQQQQHQPQQQHQQQQH. Residues 489–498 show a composition bias toward polar residues; sequence EHSQSSVFPE. The span at 499-512 shows a compositional bias: low complexity; the sequence is TTTSNSDDQTDSPS. Acidic residues predominate over residues 553 to 566; it reads SEEGEEEQTGEEVV. The segment covering 568–586 has biased composition (polar residues); it reads SLTTPTEPQTSDSESTLRQ. Basic and acidic residues-rich tracts occupy residues 772–792 and 802–869; these read QRKE…DSIR and RQRE…RKEE. A compositionally biased stretch (acidic residues) spans 890–904; sequence SQQEDTVADVEEEDN. The segment covering 965–979 has biased composition (basic and acidic residues); it reads IQENKETSQRIEPKP. Positions 981–990 are enriched in low complexity; it reads PKTNSNSSST. Composition is skewed to acidic residues over residues 1494-1507 and 1903-1912; these read LEEE…QYED and ELYDSLDDKM.

It localises to the cytoplasm. The protein resides in the cytoskeleton. Important for normal assembly of actin bundles during bristle formation. The sequence is that of Protein javelin from Drosophila melanogaster (Fruit fly).